A 257-amino-acid polypeptide reads, in one-letter code: MIIKRDNSLSKIDLRDWIWTPFFNDLVDKLSVFEIEPYPVSHDFLSKESITGSRRNPVHVTTLTWAAKFEKIKQVRLACIKGGESLSVFNLLIHPLNDYDLPFFGADFVTLPNGHLLALDLQPALKLDNIHTENVWPRLIPLHDHWQSLLPSGGEIPKEAEPYFSPGFLWSRLPLSKESDNIISEILRPAFGEYLSLYIELLHIAKPLKKERALKILEGQKAYINYRSTKDPARAMLCRFYGKEWTEDYIHKVLFNI.

It belongs to the HY2 family.

It carries out the reaction (3Z)-phycoerythrobilin + oxidized 2[4Fe-4S]-[ferredoxin] = 15,16-dihydrobiliverdin + reduced 2[4Fe-4S]-[ferredoxin] + 2 H(+). Its function is as follows. Catalyzes the two-electron reduction of the C2 and C3(1) diene system of 15,16-dihydrobiliverdin. The sequence is that of Phycoerythrobilin:ferredoxin oxidoreductase (pebB) from Prochlorococcus marinus (strain SARG / CCMP1375 / SS120).